Here is a 496-residue protein sequence, read N- to C-terminus: Putative zinc finger CCCH domain-containing protein 48 (496 aa).

Disordered stretches follow at residues 1–77 (MADS…QPVH) and 108–194 (MGAG…HPDD). Positions 143–156 (HLAEEEEEEEEEHY) are enriched in acidic residues. 3 consecutive C3H1-type zinc fingers follow at residues 377–406 (EHKT…HGED), 439–467 (KYKT…HGEV), and 469–496 (LGKK…RHSY).

This Oryza sativa subsp. japonica (Rice) protein is Putative zinc finger CCCH domain-containing protein 48.